Consider the following 500-residue polypeptide: MALLIGDGLWSGVIFTALFLLLVDLMHRRKFWRARYPPGPMPLPGLGNLLQVDFEHMPYSLYKFRQRYGDVFSLQMAWKPVVVINGLKAVREVLVNCGEDTADRPPVPIFNHVGFGHNSQGVAFARYGPQWREQRRFCVSTMRDFGVGKKSLEQWVTEEAGHLCDAFTQEAGHPFNPTTLLNKSVCNVISSLIYAHRFDYEDPFFNSLLKMLQESFGEDTGFIAEVLNAVPVLLRIPGLPGKAFPKLTAFMDSLYKMLIEHKTTWDPAQPPRGLTDAFLAEVEKAKGRPESSFNDENLRMVVADMFIAGMVTTSTTLSWALLLMILHPDVQSRVQQEIDDVIGQVRRPEMADQARMPYTNAVIHEVQRFGDIAPVNIPHMTSHDVEVQGFLIPKGTTLIPNLSSVLKDETVWEKPLHFHPEHFLDAQGRFVKHEAFMPFSAGRRACLGEPLARMELFLFFTCLLQRFSFSVPAGQPRPSDQGIFALPVTPTPYELCAVVR.

Cys-446 contributes to the heme binding site.

Belongs to the cytochrome P450 family. The cofactor is heme. Expressed in liver, but not in kidney, small intestine, and brain.

The protein resides in the endoplasmic reticulum membrane. It is found in the microsome membrane. Functionally, has bufuralol 1'-hydroxylase and debrisoquine 4-hydroxylase activities. The protein is Cytochrome P450 2D27 (CYP2D27) of Mesocricetus auratus (Golden hamster).